The primary structure comprises 502 residues: D-erythritol 1-phosphate dehydrogenase (502 aa).

FAD is bound at residue 8 to 36 (DLFVIGGGINGAGVARDAAGRGLKVVLAE).

This sequence belongs to the FAD-dependent glycerol-3-phosphate dehydrogenase family. FAD serves as cofactor.

It catalyses the reaction D-erythritol 1-phosphate + NADP(+) = D-erythrulose 1-phosphate + NADPH + H(+). It functions in the pathway carbohydrate metabolism; erythritol degradation. In terms of biological role, catalyzes the oxydation of D-erythritol 1-phosphate to D-erythrulose 1-phosphate. The chain is D-erythritol 1-phosphate dehydrogenase from Brucella abortus (strain 2308).